A 264-amino-acid polypeptide reads, in one-letter code: MKQYLDLMKHILDKGTDKSDRTGTGTRSVFGYQMRFDLNEGFPLVTTKKCHLRSIIHELLWFLKGETNVDYLHENKVSIWDEWADEKGNLGPVYGAQWRSWPTPDGRHIDQISQVIEQIKATPDSRRLIVSAWNVGELDKMALAPCHAFFQFYVADGKLSCQLYQRSCDVFLGLPFNIASYALLTMMVAQQCNLGLGDFVWTGGDTHLYSNHMEQTQLQLSREPRPLPTMKILRHPESIFDYRFEDFELSGYDPHPHIKAPVAI.

Residue arginine 21 coordinates dUMP. (6R)-5,10-methylene-5,6,7,8-tetrahydrofolate is bound at residue histidine 51. DUMP is bound at residue 126 to 127 (RR). The active-site Nucleophile is cysteine 146. DUMP contacts are provided by residues 166 to 169 (RSCD), asparagine 177, and 207 to 209 (HLY). Aspartate 169 provides a ligand contact to (6R)-5,10-methylene-5,6,7,8-tetrahydrofolate. (6R)-5,10-methylene-5,6,7,8-tetrahydrofolate is bound at residue alanine 263.

It belongs to the thymidylate synthase family. Bacterial-type ThyA subfamily. Homodimer.

Its subcellular location is the cytoplasm. It carries out the reaction dUMP + (6R)-5,10-methylene-5,6,7,8-tetrahydrofolate = 7,8-dihydrofolate + dTMP. The protein operates within pyrimidine metabolism; dTTP biosynthesis. Functionally, catalyzes the reductive methylation of 2'-deoxyuridine-5'-monophosphate (dUMP) to 2'-deoxythymidine-5'-monophosphate (dTMP) while utilizing 5,10-methylenetetrahydrofolate (mTHF) as the methyl donor and reductant in the reaction, yielding dihydrofolate (DHF) as a by-product. This enzymatic reaction provides an intracellular de novo source of dTMP, an essential precursor for DNA biosynthesis. This is Thymidylate synthase from Shewanella amazonensis (strain ATCC BAA-1098 / SB2B).